We begin with the raw amino-acid sequence, 368 residues long: 2-aminoethylphosphonate--pyruvate transaminase (368 aa).

Lysine 192 carries the post-translational modification N6-(pyridoxal phosphate)lysine.

It belongs to the class-V pyridoxal-phosphate-dependent aminotransferase family. PhnW subfamily. In terms of assembly, homodimer. The cofactor is pyridoxal 5'-phosphate.

The enzyme catalyses (2-aminoethyl)phosphonate + pyruvate = phosphonoacetaldehyde + L-alanine. Functionally, involved in phosphonate degradation. In Pseudomonas putida (strain W619), this protein is 2-aminoethylphosphonate--pyruvate transaminase.